A 135-amino-acid chain; its full sequence is Large ribosomal subunit protein uL16c (135 aa).

It belongs to the universal ribosomal protein uL16 family. As to quaternary structure, part of the 50S ribosomal subunit.

It localises to the plastid. Its subcellular location is the chloroplast. The protein is Large ribosomal subunit protein uL16c of Ceratophyllum demersum (Rigid hornwort).